The following is a 129-amino-acid chain: Large ribosomal subunit protein bL19 (129 aa).

This protein is located at the 30S-50S ribosomal subunit interface and may play a role in the structure and function of the aminoacyl-tRNA binding site. The sequence is that of Large ribosomal subunit protein bL19 from Rhodopseudomonas palustris (strain ATCC BAA-98 / CGA009).